The chain runs to 194 residues: Fe/S biogenesis protein NfuA (194 aa).

The [4Fe-4S] cluster site is built by Cys-152 and Cys-155.

The protein belongs to the NfuA family. Homodimer. [4Fe-4S] cluster serves as cofactor.

Its function is as follows. Involved in iron-sulfur cluster biogenesis. Binds a 4Fe-4S cluster, can transfer this cluster to apoproteins, and thereby intervenes in the maturation of Fe/S proteins. Could also act as a scaffold/chaperone for damaged Fe/S proteins. The protein is Fe/S biogenesis protein NfuA of Pseudomonas putida (strain ATCC 700007 / DSM 6899 / JCM 31910 / BCRC 17059 / LMG 24140 / F1).